A 293-amino-acid polypeptide reads, in one-letter code: Protease HtpX homolog (293 aa).

The next 2 membrane-spanning stretches (helical) occupy residues 4 to 24 (IFLF…VLSL) and 39 to 59 (PMLL…SLLI). His-144 is a Zn(2+) binding site. Residue Glu-145 is part of the active site. His-148 contacts Zn(2+). Helical transmembrane passes span 159–179 (LVQG…GYFV) and 200–220 (ITVL…VAWF). Residue Glu-225 participates in Zn(2+) binding.

This sequence belongs to the peptidase M48B family. It depends on Zn(2+) as a cofactor.

Its subcellular location is the cell inner membrane. This chain is Protease HtpX homolog, found in Herminiimonas arsenicoxydans.